Reading from the N-terminus, the 128-residue chain is Large ribosomal subunit protein bL20 (128 aa).

This sequence belongs to the bacterial ribosomal protein bL20 family.

In terms of biological role, binds directly to 23S ribosomal RNA and is necessary for the in vitro assembly process of the 50S ribosomal subunit. It is not involved in the protein synthesizing functions of that subunit. The chain is Large ribosomal subunit protein bL20 from Kocuria rhizophila (strain ATCC 9341 / DSM 348 / NBRC 103217 / DC2201).